Here is a 1049-residue protein sequence, read N- to C-terminus: Protein phosphatase 1 regulatory subunit 12A (1049 aa).

ANK repeat units lie at residues D39–Y68, D72–Q101, E105–V134, E138–V164, S198–I227, and D231–V260. A disordered region spans residues L302–D947. Residues I303 to V315 are compositionally biased toward polar residues. The segment covering K319–E341 has biased composition (basic and acidic residues). Over residues S359 to N371 the composition is skewed to acidic residues. Residues S378–P421 are compositionally biased toward low complexity. Residues S426–S436 are compositionally biased toward basic and acidic residues. Residues R473 to L484 are compositionally biased toward low complexity. The segment covering D485–R497 has biased composition (basic and acidic residues). Polar residues predominate over residues S545–T564. Residues S571–K592 show a composition bias toward low complexity. The segment covering A593–R607 has biased composition (polar residues). Residues S620 to T639 show a composition bias toward low complexity. The segment covering W649–S664 has biased composition (basic and acidic residues). The span at A665–V686 shows a compositional bias: low complexity. The span at V702–R711 shows a compositional bias: basic and acidic residues. The segment covering K712–R722 has biased composition (basic residues). Residues R747–R789 show a composition bias toward basic and acidic residues. Residues T790–L819 are compositionally biased toward low complexity. Positions N820 to T829 are enriched in polar residues. Residues S835–I863 are compositionally biased toward basic and acidic residues. Residues R864–S875 show a composition bias toward basic residues. Composition is skewed to basic and acidic residues over residues P890 to S906 and G934 to D947.

PP1 comprises a catalytic subunit, and one or several targeting or regulatory subunits. Ppp1r12a mediates binding to myosin.

It is found in the cytoplasm. In terms of biological role, regulates myosin phosphatase activity. This is Protein phosphatase 1 regulatory subunit 12A (ppp1r12a) from Danio rerio (Zebrafish).